Here is a 90-residue protein sequence, read N- to C-terminus: MYSLDLTLKYSPIPVSVQRKEADAAQALYQSVLEAMKGDYATLLELTCEKDEDKKIALLSDQISAVVLNKKSGAAAGGRVPGFFATQAAE.

It belongs to the UPF0367 family.

The chain is UPF0367 protein SYNPCC7002_A0153 from Picosynechococcus sp. (strain ATCC 27264 / PCC 7002 / PR-6) (Agmenellum quadruplicatum).